A 377-amino-acid polypeptide reads, in one-letter code: Protein RecA (377 aa).

76–83 is an ATP binding site; it reads GPESSGKT. Residues 346–377 form a disordered region; sequence TNGNNGEDHEGTEPVEIEAEDAAPKKGKKGKH.

Belongs to the RecA family.

It localises to the cytoplasm. Its function is as follows. Can catalyze the hydrolysis of ATP in the presence of single-stranded DNA, the ATP-dependent uptake of single-stranded DNA by duplex DNA, and the ATP-dependent hybridization of homologous single-stranded DNAs. It interacts with LexA causing its activation and leading to its autocatalytic cleavage. The polypeptide is Protein RecA (Bdellovibrio bacteriovorus (strain ATCC 15356 / DSM 50701 / NCIMB 9529 / HD100)).